The following is a 456-amino-acid chain: Bifunctional protein GlmU (456 aa).

The pyrophosphorylase stretch occupies residues 1-229 (MLNNAMSVVI…LSEVEGVNNR (229 aa)). Residues 11 to 14 (LAAG), lysine 25, glutamine 76, 81 to 82 (GT), 103 to 105 (YGD), glycine 140, glutamate 154, asparagine 169, and asparagine 227 each bind UDP-N-acetyl-alpha-D-glucosamine. Aspartate 105 contributes to the Mg(2+) binding site. Asparagine 227 contributes to the Mg(2+) binding site. Positions 230–250 (LQLSRLERVYQSEQAEKLLLA) are linker. The N-acetyltransferase stretch occupies residues 251–456 (GVMLRDPARF…EGWRRPVKKK (206 aa)). Arginine 333 and lysine 351 together coordinate UDP-N-acetyl-alpha-D-glucosamine. The active-site Proton acceptor is the histidine 363. UDP-N-acetyl-alpha-D-glucosamine contacts are provided by tyrosine 366 and asparagine 377. Acetyl-CoA-binding positions include alanine 380, 386–387 (NY), serine 405, alanine 423, and arginine 440.

In the N-terminal section; belongs to the N-acetylglucosamine-1-phosphate uridyltransferase family. This sequence in the C-terminal section; belongs to the transferase hexapeptide repeat family. As to quaternary structure, homotrimer. Requires Mg(2+) as cofactor.

The protein localises to the cytoplasm. The catalysed reaction is alpha-D-glucosamine 1-phosphate + acetyl-CoA = N-acetyl-alpha-D-glucosamine 1-phosphate + CoA + H(+). It carries out the reaction N-acetyl-alpha-D-glucosamine 1-phosphate + UTP + H(+) = UDP-N-acetyl-alpha-D-glucosamine + diphosphate. It functions in the pathway nucleotide-sugar biosynthesis; UDP-N-acetyl-alpha-D-glucosamine biosynthesis; N-acetyl-alpha-D-glucosamine 1-phosphate from alpha-D-glucosamine 6-phosphate (route II): step 2/2. The protein operates within nucleotide-sugar biosynthesis; UDP-N-acetyl-alpha-D-glucosamine biosynthesis; UDP-N-acetyl-alpha-D-glucosamine from N-acetyl-alpha-D-glucosamine 1-phosphate: step 1/1. It participates in bacterial outer membrane biogenesis; LPS lipid A biosynthesis. Functionally, catalyzes the last two sequential reactions in the de novo biosynthetic pathway for UDP-N-acetylglucosamine (UDP-GlcNAc). The C-terminal domain catalyzes the transfer of acetyl group from acetyl coenzyme A to glucosamine-1-phosphate (GlcN-1-P) to produce N-acetylglucosamine-1-phosphate (GlcNAc-1-P), which is converted into UDP-GlcNAc by the transfer of uridine 5-monophosphate (from uridine 5-triphosphate), a reaction catalyzed by the N-terminal domain. The chain is Bifunctional protein GlmU from Shigella boydii serotype 4 (strain Sb227).